The following is a 138-amino-acid chain: MKITRFGVSVPDELLEKFDRIIEEKGYVNRSEAIRDLMRDFIVRHEWEEGDREVAGTITIVYNHDEADVVKELLELQHDYVDEIVSSLHVHMDEHNCLEVVVVKGKAGRIKEIAERLISLKGVKHGKLVMTTTGRELV.

Residues histidine 78, histidine 89, histidine 91, and cysteine 97 each coordinate Ni(2+).

It belongs to the transcriptional regulatory CopG/NikR family. Ni(2+) serves as cofactor.

Its function is as follows. Transcriptional regulator. The protein is Putative nickel-responsive regulator of Thermococcus onnurineus (strain NA1).